The sequence spans 560 residues: Digoxin reductase (560 aa).

The tat-type signal signal peptide spans 1 to 48 (MEYGKCRGIERGMGRRDFLKAATLLGATAAGAGMLAGCAPKSASEAQA).

It belongs to the FAD-dependent oxidoreductase 2 family. May form a membrane-associated complex with Cgr1. FAD is required as a cofactor. Requires [4Fe-4S] cluster as cofactor. Predicted to be exported by the Tat system. The position of the signal peptide cleavage has not been experimentally proven.

It is found in the cell membrane. The enzyme catalyses digoxin + 2 Fe(II)-[cytochrome c] + 3 H(+) = dihydrodigoxin + 2 Fe(III)-[cytochrome c]. It catalyses the reaction digitoxin + 2 Fe(II)-[cytochrome c] + 3 H(+) = dihydrodigitoxin + 2 Fe(III)-[cytochrome c]. It carries out the reaction digoxigenin + 2 Fe(II)-[cytochrome c] + 3 H(+) = dihydrodigoxigenin + 2 Fe(III)-[cytochrome c]. The catalysed reaction is ouabain + 2 Fe(II)-[cytochrome c] + 3 H(+) = dihydroouabain + 2 Fe(III)-[cytochrome c]. The enzyme catalyses ouabagenin + 2 Fe(II)-[cytochrome c] + 3 H(+) = dihydroouabagenin + 2 Fe(III)-[cytochrome c]. Functionally, involved in the inactivation of the cardiac medication and plant natural product digoxin, thus decreasing drug efficacy and toxicity. Catalyzes the reduction of the alpha,beta-unsaturated butyrolactone ring of digoxin to the inactive metabolite dihydrodigoxin. Likely uses the cytochrome Cgr1 as the physiological electron donor, encoded by the adjacent gene in the locus. Only reduces digoxin and other cardenolide toxins, such as digitoxin, digoxigenin, ouabain and ouabagenin. Therefore is a specialized enzyme present in some gut bacteria E.lenta that protects their human host against ingested plant toxins. This chain is Digoxin reductase, found in Eggerthella lenta (strain ATCC 25559 / DSM 2243 / CCUG 17323 / JCM 9979 / KCTC 3265 / NCTC 11813 / VPI 0255 / 1899 B) (Eubacterium lentum).